Reading from the N-terminus, the 190-residue chain is Putative resolvase R80 (190 aa).

The H-T-H motif DNA-binding region spans 11–30; that stretch reads SSVLGVHQRTLYQWDKKGWI. A Resolvase/invertase-type recombinase catalytic domain is found at 61-190; the sequence is LSICYVRVSS…RNGSRKYSNK (130 aa). A coiled-coil region spans residues 67–92; it reads RVSSNSQKDDLERQIKFMKKKYPNHT. The active-site O-(5'-phospho-DNA)-serine intermediate is Ser69.

This sequence belongs to the site-specific recombinase resolvase family.

In terms of biological role, resolvase catalyzes the resolution (a site-specific recombination) of the cointegrated replicon to yield the final transposition products. The sequence is that of Putative resolvase R80 from Acanthamoeba polyphaga mimivirus (APMV).